The primary structure comprises 485 residues: Membrane-bound lytic murein transglycosylase F (485 aa).

A signal peptide spans 1 to 29 (MFAHTALRQRCAKWLFATGLFLLLGACVE). Positions 30-267 (KPSTLERVKE…RLKDRYYGHV (238 aa)) are non-LT domain. The interval 268–485 (DVLGYVGAYT…DKPAEQSPPM (218 aa)) is LT domain. Residue glutamate 314 is part of the active site. The segment at 465–485 (EGNLHVPGVNKDKPAEQSPPM) is disordered.

This sequence in the N-terminal section; belongs to the bacterial solute-binding protein 3 family. It in the C-terminal section; belongs to the transglycosylase Slt family.

It is found in the cell outer membrane. The catalysed reaction is Exolytic cleavage of the (1-&gt;4)-beta-glycosidic linkage between N-acetylmuramic acid (MurNAc) and N-acetylglucosamine (GlcNAc) residues in peptidoglycan, from either the reducing or the non-reducing ends of the peptidoglycan chains, with concomitant formation of a 1,6-anhydrobond in the MurNAc residue.. Murein-degrading enzyme that degrades murein glycan strands and insoluble, high-molecular weight murein sacculi, with the concomitant formation of a 1,6-anhydromuramoyl product. Lytic transglycosylases (LTs) play an integral role in the metabolism of the peptidoglycan (PG) sacculus. Their lytic action creates space within the PG sacculus to allow for its expansion as well as for the insertion of various structures such as secretion systems and flagella. The sequence is that of Membrane-bound lytic murein transglycosylase F from Pseudomonas putida (strain W619).